The primary structure comprises 233 residues: Small ribosomal subunit protein uS3 (233 aa).

The 69-residue stretch at 39-107 (IRAFLKRKLY…DVNINIKEER (69 aa)) folds into the KH type-2 domain. Over residues 212-222 (MQPEKTEESAP) the composition is skewed to basic and acidic residues. Residues 212-233 (MQPEKTEESAPAKKSRRTRRGK) are disordered. Basic residues predominate over residues 224 to 233 (KKSRRTRRGK).

This sequence belongs to the universal ribosomal protein uS3 family. Part of the 30S ribosomal subunit. Forms a tight complex with proteins S10 and S14.

In terms of biological role, binds the lower part of the 30S subunit head. Binds mRNA in the 70S ribosome, positioning it for translation. The polypeptide is Small ribosomal subunit protein uS3 (Campylobacter jejuni subsp. doylei (strain ATCC BAA-1458 / RM4099 / 269.97)).